A 473-amino-acid polypeptide reads, in one-letter code: Cysteine--tRNA ligase (473 aa).

Cys-29 is a binding site for Zn(2+). The 'HIGH' region motif lies at 31-41 (PTVYDRAHLGN). Positions 225, 250, and 254 each coordinate Zn(2+). The 'KMSKS' region signature appears at 281–285 (KMSKS). Lys-284 provides a ligand contact to ATP.

It belongs to the class-I aminoacyl-tRNA synthetase family. Monomer. Zn(2+) is required as a cofactor.

The protein resides in the cytoplasm. The enzyme catalyses tRNA(Cys) + L-cysteine + ATP = L-cysteinyl-tRNA(Cys) + AMP + diphosphate. The chain is Cysteine--tRNA ligase from Roseobacter denitrificans (strain ATCC 33942 / OCh 114) (Erythrobacter sp. (strain OCh 114)).